We begin with the raw amino-acid sequence, 121 residues long: Large ribosomal subunit protein bL20 (121 aa).

This sequence belongs to the bacterial ribosomal protein bL20 family.

Its function is as follows. Binds directly to 23S ribosomal RNA and is necessary for the in vitro assembly process of the 50S ribosomal subunit. It is not involved in the protein synthesizing functions of that subunit. The sequence is that of Large ribosomal subunit protein bL20 from Koribacter versatilis (strain Ellin345).